Consider the following 80-residue polypeptide: UPF0291 protein LACR_1198 (80 aa).

It belongs to the UPF0291 family.

The protein localises to the cytoplasm. This is UPF0291 protein LACR_1198 from Lactococcus lactis subsp. cremoris (strain SK11).